A 938-amino-acid chain; its full sequence is RIPOR family member 3 (938 aa).

Residues S9, S24, and S340 each carry the phosphoserine modification. T345 is modified (phosphothreonine). 2 positions are modified to phosphoserine: S351 and S384. Disordered stretches follow at residues 402–430 (EMDSFSSEDPRDTETSTSASTSDVGFLPV) and 579–603 (FGGSQAPERDSPPPPRPSLKVSPSE).

The protein belongs to the RIPOR family.

In Mus musculus (Mouse), this protein is RIPOR family member 3.